Consider the following 418-residue polypeptide: Tyrosine--tRNA ligase (418 aa).

Y34 contacts L-tyrosine. The short motif at P39 to H48 is the 'HIGH' region element. L-tyrosine contacts are provided by Y169 and Q173. Positions K229–S233 match the 'KMSKS' region motif. ATP is bound at residue K232. Positions H352–Y418 constitute an S4 RNA-binding domain.

It belongs to the class-I aminoacyl-tRNA synthetase family. TyrS type 1 subfamily. In terms of assembly, homodimer.

It is found in the cytoplasm. It carries out the reaction tRNA(Tyr) + L-tyrosine + ATP = L-tyrosyl-tRNA(Tyr) + AMP + diphosphate + H(+). Catalyzes the attachment of tyrosine to tRNA(Tyr) in a two-step reaction: tyrosine is first activated by ATP to form Tyr-AMP and then transferred to the acceptor end of tRNA(Tyr). This is Tyrosine--tRNA ligase from Streptococcus pyogenes serotype M49 (strain NZ131).